The chain runs to 168 residues: Thermonuclease (168 aa).

A signal peptide spans 1–27 (MKKITTGVLILAIAIVVLIFQYINGDG). Catalysis depends on residues R64, E72, and R114.

It belongs to the thermonuclease family. Requires Ca(2+) as cofactor.

The protein localises to the secreted. The enzyme catalyses Endonucleolytic cleavage to nucleoside 3'-phosphates and 3'-phosphooligonucleotide end-products.. Enzyme that catalyzes the hydrolysis of both DNA and RNA at the 5'-position of the phosphodiester bond. This is Thermonuclease (nucI) from Staphylococcus intermedius.